We begin with the raw amino-acid sequence, 124 residues long: Small ribosomal subunit protein uS12 (124 aa).

A 3-methylthioaspartic acid modification is found at D89. The interval 105 to 124 is disordered; the sequence is QGVKNRKQARSKYGAKMEKK.

It belongs to the universal ribosomal protein uS12 family. Part of the 30S ribosomal subunit. Contacts proteins S8 and S17. May interact with IF1 in the 30S initiation complex.

With S4 and S5 plays an important role in translational accuracy. Its function is as follows. Interacts with and stabilizes bases of the 16S rRNA that are involved in tRNA selection in the A site and with the mRNA backbone. Located at the interface of the 30S and 50S subunits, it traverses the body of the 30S subunit contacting proteins on the other side and probably holding the rRNA structure together. The combined cluster of proteins S8, S12 and S17 appears to hold together the shoulder and platform of the 30S subunit. The chain is Small ribosomal subunit protein uS12 from Renibacterium salmoninarum (strain ATCC 33209 / DSM 20767 / JCM 11484 / NBRC 15589 / NCIMB 2235).